The sequence spans 218 residues: Thiamine-phosphate synthase (218 aa).

Residues 43–47 (QLRDK) and Asn75 each bind 4-amino-2-methyl-5-(diphosphooxymethyl)pyrimidine. Mg(2+)-binding residues include Asp76 and Asp95. Ser114 contributes to the 4-amino-2-methyl-5-(diphosphooxymethyl)pyrimidine binding site. 141–143 (TPT) is a binding site for 2-[(2R,5Z)-2-carboxy-4-methylthiazol-5(2H)-ylidene]ethyl phosphate. Lys144 serves as a coordination point for 4-amino-2-methyl-5-(diphosphooxymethyl)pyrimidine. Gly172 is a 2-[(2R,5Z)-2-carboxy-4-methylthiazol-5(2H)-ylidene]ethyl phosphate binding site.

It belongs to the thiamine-phosphate synthase family. Mg(2+) is required as a cofactor.

The catalysed reaction is 2-[(2R,5Z)-2-carboxy-4-methylthiazol-5(2H)-ylidene]ethyl phosphate + 4-amino-2-methyl-5-(diphosphooxymethyl)pyrimidine + 2 H(+) = thiamine phosphate + CO2 + diphosphate. It catalyses the reaction 2-(2-carboxy-4-methylthiazol-5-yl)ethyl phosphate + 4-amino-2-methyl-5-(diphosphooxymethyl)pyrimidine + 2 H(+) = thiamine phosphate + CO2 + diphosphate. It carries out the reaction 4-methyl-5-(2-phosphooxyethyl)-thiazole + 4-amino-2-methyl-5-(diphosphooxymethyl)pyrimidine + H(+) = thiamine phosphate + diphosphate. It participates in cofactor biosynthesis; thiamine diphosphate biosynthesis; thiamine phosphate from 4-amino-2-methyl-5-diphosphomethylpyrimidine and 4-methyl-5-(2-phosphoethyl)-thiazole: step 1/1. Its function is as follows. Condenses 4-methyl-5-(beta-hydroxyethyl)thiazole monophosphate (THZ-P) and 2-methyl-4-amino-5-hydroxymethyl pyrimidine pyrophosphate (HMP-PP) to form thiamine monophosphate (TMP). This Thermobifida fusca (strain YX) protein is Thiamine-phosphate synthase.